We begin with the raw amino-acid sequence, 233 residues long: Large ribosomal subunit protein uL1 (233 aa).

It belongs to the universal ribosomal protein uL1 family. As to quaternary structure, part of the 50S ribosomal subunit.

Functionally, binds directly to 23S rRNA. The L1 stalk is quite mobile in the ribosome, and is involved in E site tRNA release. In terms of biological role, protein L1 is also a translational repressor protein, it controls the translation of the L11 operon by binding to its mRNA. This chain is Large ribosomal subunit protein uL1, found in Brucella canis (strain ATCC 23365 / NCTC 10854 / RM-666).